The following is a 202-amino-acid chain: Endothelin-1 (202 aa).

Positions 1–25 are cleaved as a signal peptide; that stretch reads MDYLPVLFSLLLVVFQGAPEAAVLG. Positions 26-50 are excised as a propeptide; the sequence is AELSTGPDSGGEKPAPSAPWRPRRS. The tract at residues 28 to 48 is disordered; that stretch reads LSTGPDSGGEKPAPSAPWRPR. 2 disulfides stabilise this stretch: cysteine 53–cysteine 67 and cysteine 55–cysteine 63. Residues 74–202 constitute a propeptide that is removed on maturation; it reads VNTPEHIVPY…EKKVTHNRTH (129 aa). An endothelin-like region spans residues 110–124; sequence CQCASQKDKKCWTFC.

The protein belongs to the endothelin/sarafotoxin family.

The protein localises to the secreted. In terms of biological role, endothelins are endothelium-derived vasoconstrictor peptides. Probable ligand for G-protein coupled receptors EDNRA and EDNRB which activates PTK2B, BCAR1, BCAR3 and, GTPases RAP1 and RHOA cascade in glomerular mesangial cells. Also binds the DEAR/FBXW7-AS1 receptor. Promotes mesenteric arterial wall remodeling via activation of ROCK signaling and subsequent colocalization of NFATC3 with F-actin filaments. NFATC3 then translocates to the nucleus where it subsequently promotes the transcription of the smooth muscle hypertrophy and differentiation marker ACTA2. This is Endothelin-1 (EDN1) from Felis catus (Cat).